We begin with the raw amino-acid sequence, 547 residues long: DNA mismatch repair protein MutL (547 aa).

The protein belongs to the DNA mismatch repair MutL/HexB family.

This protein is involved in the repair of mismatches in DNA. It is required for dam-dependent methyl-directed DNA mismatch repair. May act as a 'molecular matchmaker', a protein that promotes the formation of a stable complex between two or more DNA-binding proteins in an ATP-dependent manner without itself being part of a final effector complex. The protein is DNA mismatch repair protein MutL of Deinococcus radiodurans (strain ATCC 13939 / DSM 20539 / JCM 16871 / CCUG 27074 / LMG 4051 / NBRC 15346 / NCIMB 9279 / VKM B-1422 / R1).